The chain runs to 401 residues: NADH-quinone oxidoreductase subunit D 2 (401 aa).

This sequence belongs to the complex I 49 kDa subunit family. NDH-1 is composed of 14 different subunits. Subunits NuoB, C, D, E, F, and G constitute the peripheral sector of the complex.

Its subcellular location is the cell inner membrane. The enzyme catalyses a quinone + NADH + 5 H(+)(in) = a quinol + NAD(+) + 4 H(+)(out). NDH-1 shuttles electrons from NADH, via FMN and iron-sulfur (Fe-S) centers, to quinones in the respiratory chain. The immediate electron acceptor for the enzyme in this species is believed to be ubiquinone. Couples the redox reaction to proton translocation (for every two electrons transferred, four hydrogen ions are translocated across the cytoplasmic membrane), and thus conserves the redox energy in a proton gradient. The sequence is that of NADH-quinone oxidoreductase subunit D 2 from Koribacter versatilis (strain Ellin345).